We begin with the raw amino-acid sequence, 280 residues long: Cobalt import ATP-binding protein CbiO (280 aa).

One can recognise an ABC transporter domain in the interval 2–236 (IEVRDLRFHY…GDWLRQQGLG (235 aa)). Residue 36–43 (GANGCGKT) coordinates ATP.

It belongs to the ABC transporter superfamily. Cobalt importer (TC 3.A.1.18.1) family. In terms of assembly, forms an energy-coupling factor (ECF) transporter complex composed of an ATP-binding protein (A component, CbiO), a transmembrane protein (T component, CbiQ) and 2 possible substrate-capture proteins (S components, CbiM and CbiN) of unknown stoichimetry.

Its subcellular location is the cell inner membrane. It functions in the pathway cofactor biosynthesis; adenosylcobalamin biosynthesis. Functionally, part of the energy-coupling factor (ECF) transporter complex CbiMNOQ involved in cobalt import. Presumably responsible for energy coupling to the transport system. The chain is Cobalt import ATP-binding protein CbiO from Syntrophus aciditrophicus (strain SB).